A 229-amino-acid polypeptide reads, in one-letter code: NAD-dependent protein deacylase (229 aa).

In terms of domain architecture, Deacetylase sirtuin-type spans 1–227 (MKNLVILSGA…QDLMPKLIEM (227 aa)). 9 to 28 (GAGISAESGIKTFRDADGLW) provides a ligand contact to NAD(+). Residues Tyr53 and Arg56 each coordinate substrate. 86 to 89 (QNVD) serves as a coordination point for NAD(+). Catalysis depends on His104, which acts as the Proton acceptor. 169 to 171 (GTS) provides a ligand contact to NAD(+).

This sequence belongs to the sirtuin family. Class III subfamily.

The protein resides in the cytoplasm. The enzyme catalyses N(6)-acetyl-L-lysyl-[protein] + NAD(+) + H2O = 2''-O-acetyl-ADP-D-ribose + nicotinamide + L-lysyl-[protein]. It catalyses the reaction N(6)-succinyl-L-lysyl-[protein] + NAD(+) + H2O = 2''-O-succinyl-ADP-D-ribose + nicotinamide + L-lysyl-[protein]. Its function is as follows. NAD-dependent lysine deacetylase and desuccinylase that specifically removes acetyl and succinyl groups on target proteins. Modulates the activities of several proteins which are inactive in their acylated form. This Helicobacter pylori (strain ATCC 700392 / 26695) (Campylobacter pylori) protein is NAD-dependent protein deacylase.